The primary structure comprises 338 residues: Ketol-acid reductoisomerase (NADP(+)) (338 aa).

A KARI N-terminal Rossmann domain is found at Met-1 to Thr-181. Residues Phe-24 to Gln-27, Arg-47, Ser-52, and Asp-82 to Gln-85 each bind NADP(+). Residue His-107 is part of the active site. Gly-133 is an NADP(+) binding site. The KARI C-terminal knotted domain occupies Thr-182–Ile-327. Positions 190, 194, 226, and 230 each coordinate Mg(2+). Ser-251 lines the substrate pocket.

This sequence belongs to the ketol-acid reductoisomerase family. Mg(2+) is required as a cofactor.

It carries out the reaction (2R)-2,3-dihydroxy-3-methylbutanoate + NADP(+) = (2S)-2-acetolactate + NADPH + H(+). It catalyses the reaction (2R,3R)-2,3-dihydroxy-3-methylpentanoate + NADP(+) = (S)-2-ethyl-2-hydroxy-3-oxobutanoate + NADPH + H(+). It participates in amino-acid biosynthesis; L-isoleucine biosynthesis; L-isoleucine from 2-oxobutanoate: step 2/4. Its pathway is amino-acid biosynthesis; L-valine biosynthesis; L-valine from pyruvate: step 2/4. Functionally, involved in the biosynthesis of branched-chain amino acids (BCAA). Catalyzes an alkyl-migration followed by a ketol-acid reduction of (S)-2-acetolactate (S2AL) to yield (R)-2,3-dihydroxy-isovalerate. In the isomerase reaction, S2AL is rearranged via a Mg-dependent methyl migration to produce 3-hydroxy-3-methyl-2-ketobutyrate (HMKB). In the reductase reaction, this 2-ketoacid undergoes a metal-dependent reduction by NADPH to yield (R)-2,3-dihydroxy-isovalerate. In Sulfurimonas denitrificans (strain ATCC 33889 / DSM 1251) (Thiomicrospira denitrificans (strain ATCC 33889 / DSM 1251)), this protein is Ketol-acid reductoisomerase (NADP(+)).